The sequence spans 1039 residues: Integrin alpha-4 (1039 aa).

The first 40 residues, 1–40 (MFSTKSAWLRNGGADQGPRGIALREAVMLLLYFGVPTGPS), serve as a signal peptide directing secretion. At 41-983 (YNLDPENALL…LHHQRPKRHF (943 aa)) the chain is on the extracellular side. FG-GAP repeat units lie at residues 42-107 (NLDP…PNQT), 117-184 (SGEP…TELS), 193-244 (DYTR…QYKA), 246-298 (VDRQ…ENEL), 299-358 (NIVY…GAVM), 362-419 (ERVL…GISS), and 423-485 (QRIE…HPES). N-linked (GlcNAc...) asparagine glycans are attached at residues N86, N105, and N145. Residues C98 and C108 are joined by a disulfide bond. Intrachain disulfides connect C151-C172 and C190-C205. N236 carries N-linked (GlcNAc...) asparagine glycosylation. Residues D321, N323, D325, D329, D384, D386, D388, D392, D446, D448, N450, Y452, and D454 each coordinate Ca(2+). The N-linked (GlcNAc...) asparagine glycan is linked to N487. 2 disulfides stabilise this stretch: C493–C502 and C508–C564. 2 N-linked (GlcNAc...) asparagine glycosylation sites follow: N525 and N545. The SG1 motif lies at 613-623 (KKEKDVIRKMI). C629 and C634 are disulfide-bonded. Residues N633, N652, and N667 are each glycosylated (N-linked (GlcNAc...) asparagine). C705 and C718 form a disulfide bridge. N-linked (GlcNAc...) asparagine glycans are attached at residues N813 and N828. 2 disulfide bridges follow: C859–C897 and C904–C909. A helical transmembrane segment spans residues 984 to 1007 (TIIIITISLLLGLIVLLLISCVMW). The Cytoplasmic segment spans residues 1008–1039 (KAGFFKRQYKSILQEENRRDSWSYVNSKSNDD). Positions 1010-1014 (GFFKR) match the GFFKR motif motif. Phosphoserine is present on S1028.

Belongs to the integrin alpha chain family. In terms of assembly, heterodimer of an alpha and a beta subunit. The alpha subunit can sometimes be cleaved into two non-covalently associated fragments. Alpha-4 associates with either beta-1 or beta-7. Alpha-4 interacts with PXN, LPXN, and TGFB1I1/HIC5. Interacts with CSPG4 through CSPG4 chondroitin sulfate glycosaminoglycan. Interacts with JAML; integrin alpha-4/beta-1 may regulate leukocyte to endothelial cells adhesion by controlling JAML homodimerization. ITGA4:ITGB1 is found in a ternary complex with CX3CR1 and CX3CL1. Interacts with MDK. ITGA4:ITGB1 interacts with MDK; this interaction mediates MDK-induced osteoblast cells migration through PXN phosphorylation. Integrin ITGA4:ITGB1 interacts with SVEP1 (via Sushi domain 21); thereby inhibits Ca(2+) intracellular signaling and as a result represses vasocontraction. ITGA4:ITGB1 interacts with SELP. ITGA4:ITGB1 interacts with BCAM. Phosphorylation on Ser-1028 inhibits PXN binding. In terms of tissue distribution, expressed in the media layer of the arterial wall (at protein level). Weakly expression in the thymus, spleen and mesenteric lymph nodes.

The protein resides in the membrane. Its function is as follows. Integrins alpha-4/beta-1 (VLA-4 or LPAM-2) and alpha-4/beta-7 (LPAM-1) are receptors for fibronectin. They recognize one or more domains within the alternatively spliced CS-1 and CS-5 regions of fibronectin. They are also receptors for VCAM1. Integrin alpha-4/beta-1 recognizes the sequence Q-I-D-S in VCAM1. Integrin alpha-4/beta-7 is also a receptor for MADCAM1. It recognizes the sequence L-D-T in MADCAM1. On activated endothelial cells integrin VLA-4 triggers homotypic aggregation for most VLA-4-positive leukocyte cell lines. It may also participate in cytolytic T-cell interactions with target cells. ITGA4:ITGB1 binds to fractalkine (CX3CL1) and may act as its coreceptor in CX3CR1-dependent fractalkine signaling. ITGA4:ITGB1 binds to PLA2G2A via a site (site 2) which is distinct from the classical ligand-binding site (site 1) and this induces integrin conformational changes and enhanced ligand binding to site 1. Integrin ITGA4:ITGB1 represses PRKCA-mediated L-type voltage-gated channel Ca(2+) influx and ROCK-mediated calcium sensitivity in vascular smooth muscle cells via its interaction with SVEP1, thereby inhibiting vasocontraction. This is Integrin alpha-4 (Itga4) from Mus musculus (Mouse).